An 863-amino-acid polypeptide reads, in one-letter code: Adenosylcobalamin biosynthesis bifunctional protein CobDQ (863 aa).

A putative threonine-phosphate decarboxylase region spans residues 1–373 (MNLPEHGGNL…LKSRKKTPSI (373 aa)). O-phospho-L-threonine is bound by residues 6–7 (HG), asparagine 30, and asparagine 159. At lysine 214 the chain carries N6-(pyridoxal phosphate)lysine. 2 residues coordinate O-phospho-L-threonine: arginine 323 and arginine 337. A cobyric acid synthase region spans residues 374 to 863 (MFQGTASNVG…NLIYRKLGLG (490 aa)). Residues 622-810 (RLDVVLIDIP…IHGIFDKDEF (189 aa)) enclose the GATase cobBQ-type domain. The active-site Nucleophile is the cysteine 704. Histidine 802 is an active-site residue.

It in the N-terminal section; belongs to the class-II pyridoxal-phosphate-dependent aminotransferase family. This sequence in the C-terminal section; belongs to the CobB/CobQ family. CobQ subfamily. The cofactor is pyridoxal 5'-phosphate.

It carries out the reaction O-phospho-L-threonine + H(+) = (R)-1-aminopropan-2-yl phosphate + CO2. It functions in the pathway cofactor biosynthesis; adenosylcobalamin biosynthesis. Functionally, catalyzes two activities which are involved in the adenosylcobalamin biosynthesis: decarboxylates L-threonine-O-3-phosphate to yield (R)-1-amino-2-propanol O-2-phosphate, the precursor for the linkage between the nucleotide loop and the corrin ring in cobalamin, and catalyzes amidations at positions B, D, E, and G on adenosylcobyrinic A,C-diamide. NH(2) groups are provided by glutamine, and one molecule of ATP is hydrogenolyzed for each amidation. This is Adenosylcobalamin biosynthesis bifunctional protein CobDQ (cobDQ) from Leptospira interrogans serogroup Icterohaemorrhagiae serovar Lai (strain 56601).